Here is a 340-residue protein sequence, read N- to C-terminus: Probable quinone oxidoreductase (340 aa).

The protein belongs to the zinc-containing alcohol dehydrogenase family. Quinone oxidoreductase subfamily.

It carries out the reaction 2 a quinone + NADPH + H(+) = 2 a 1,4-benzosemiquinone + NADP(+). The chain is Probable quinone oxidoreductase from Leishmania amazonensis.